A 550-amino-acid chain; its full sequence is Chaperonin GroEL (550 aa).

Residues 30–33, lysine 51, 87–91, glycine 415, and aspartate 495 contribute to the ATP site; these read TLGP and DGTTT.

Belongs to the chaperonin (HSP60) family. In terms of assembly, forms a cylinder of 14 subunits composed of two heptameric rings stacked back-to-back. Interacts with the co-chaperonin GroES.

It localises to the cytoplasm. It carries out the reaction ATP + H2O + a folded polypeptide = ADP + phosphate + an unfolded polypeptide.. Its function is as follows. Together with its co-chaperonin GroES, plays an essential role in assisting protein folding. The GroEL-GroES system forms a nano-cage that allows encapsulation of the non-native substrate proteins and provides a physical environment optimized to promote and accelerate protein folding. The polypeptide is Chaperonin GroEL (Dechloromonas aromatica (strain RCB)).